Consider the following 507-residue polypeptide: ATP synthase subunit alpha, chloroplastic (507 aa).

Residue 170 to 177 participates in ATP binding; the sequence is GDRQTGKT.

The protein belongs to the ATPase alpha/beta chains family. In terms of assembly, F-type ATPases have 2 components, CF(1) - the catalytic core - and CF(0) - the membrane proton channel. CF(1) has five subunits: alpha(3), beta(3), gamma(1), delta(1), epsilon(1). CF(0) has four main subunits: a, b, b' and c.

It is found in the plastid. The protein resides in the chloroplast thylakoid membrane. It catalyses the reaction ATP + H2O + 4 H(+)(in) = ADP + phosphate + 5 H(+)(out). Its function is as follows. Produces ATP from ADP in the presence of a proton gradient across the membrane. The alpha chain is a regulatory subunit. The polypeptide is ATP synthase subunit alpha, chloroplastic (Drimys granadensis).